Consider the following 344-residue polypeptide: MRNNPVLPVSDPPLAGENDSDGKGVDDRLFKGSAMTKRGAYAALSYMACAVMLVLFNKAALSSYDFPCVNVITLFQMVSSSLFLYALRRRKIISFTAADSFSIDSASTFVPVKTLFHTLPLAIAYLLYMLASMASVRGVNVPMYTTLRRTTVAFTMVIEYMLTGQRYTRSIIGSVGIILLGAFFAGARDLSFDFYGYGVVFLANISTAVYLATIARTGKSSGLNSFGLMWSNGIICGPILMIWTFICGDLEKTINFPHLLTPGFMVVLLCSCVLAFVLNYCIFLNTTLNSALTQTICGNMKDLFTVGLGWMLFGGLPFDLMNVIGQLFGFFGSGLYAYYKIIGR.

The disordered stretch occupies residues 1-23; it reads MRNNPVLPVSDPPLAGENDSDGK. A run of 9 helical transmembrane segments spans residues 41 to 61, 66 to 86, 92 to 112, 114 to 134, 167 to 187, 194 to 214, 226 to 246, 264 to 284, and 304 to 324; these read YAAL…KAAL, FPCV…FLYA, IISF…FVPV, TLFH…ASMA, YTRS…FAGA, FYGY…LATI, FGLM…WTFI, FMVV…CIFL, and FTVG…MNVI.

The protein belongs to the TPT transporter family. UGnT (TC 2.A.7.15) subfamily. As to expression, expressed in roots, leaves, stems, flowers and siliques.

Its subcellular location is the golgi apparatus membrane. Functionally, mediates the transport of UDP-N-acetylglucosamine (UDP-GlcNAc) across the Golgi apparatus membrane. Delivers an essential substrate for the maturation of N-glycans and the GlcNAc-containing glycosyl inositol phosphorylceramide (GIPC) class of sphingolipids in the Golgi apparatus. This chain is UDP-N-acetylglucosamine transporter UGNT1, found in Arabidopsis thaliana (Mouse-ear cress).